The sequence spans 289 residues: HTH-type transcriptional regulator SoxR (289 aa).

The 58-residue stretch at 1 to 58 folds into the HTH lysR-type domain; that stretch reads MEIKDLQIFQKVVEYGSVSKAAKSLNYVQSYVTVRIQKLEEELQTELFHRSSRGMVLN. A DNA-binding region (H-T-H motif) is located at residues 18-37; sequence VSKAAKSLNYVQSYVTVRIQ.

The protein belongs to the LysR transcriptional regulatory family.

In terms of biological role, transcriptional repressor of soxA gene expression. This Arthrobacter sp. (strain TE1826) protein is HTH-type transcriptional regulator SoxR (soxR).